A 641-amino-acid polypeptide reads, in one-letter code: SUMO-activating enzyme subunit 2-A (641 aa).

Residues 24–29, aspartate 48, 56–59, lysine 72, 95–96, and 117–122 each bind ATP; these read GAGGIG, NLNR, SI, and DNNAAR. Zn(2+) is bound by residues cysteine 158 and cysteine 161. The Glycyl thioester intermediate role is filled by cysteine 173. Zn(2+) is bound by residues cysteine 439 and cysteine 442. The segment at 546 to 641 is disordered; that stretch reads GDVPEKGPQK…EEDDDIIALD (96 aa). Positions 548–561 are enriched in basic and acidic residues; that stretch reads VPEKGPQKPPEESV. Polar residues predominate over residues 562–579; the sequence is KNITNGSDDGAQPSTSKA. Composition is skewed to acidic residues over residues 582-594 and 630-641; these read QDDVLIVDSDEES and PVEEDDDIIALD.

The protein belongs to the ubiquitin-activating E1 family. As to quaternary structure, heterodimer of sae1 and uba2/sae2. The heterodimer corresponds to the two domains that are encoded on a single polypeptide chain in ubiquitin-activating enzyme E1. Interacts with ube2i.

It localises to the nucleus. It participates in protein modification; protein sumoylation. Functionally, the heterodimer acts as an E1 ligase for sumo1, sumo2, and sumo3. It mediates ATP-dependent activation of sumo proteins followed by formation of a thioester bond between a sumo protein and a conserved active site cysteine residue on uba2/sae2. In Xenopus laevis (African clawed frog), this protein is SUMO-activating enzyme subunit 2-A (uba2-a).